The following is a 1585-amino-acid chain: Adhesion G protein-coupled receptor B2 (1585 aa).

Residues 1 to 32 (MENTGWMGKGHRMTPACPLLLSVILSLRLATA) form the signal peptide. Residues 33–936 (FDPAPSACSA…ELAGSPSVPL (904 aa)) lie on the Extracellular side of the membrane. N-linked (GlcNAc...) asparagine glycans are attached at residues Asn-106, Asn-191, and Asn-192. A compositionally biased stretch (low complexity) spans 229 to 238 (AGAGSTTTTS). A disordered region spans residues 229–271 (AGAGSTTTTSPGPPAAHTLSNALVPGGPAPPAEADLHSGSSND). Ser-266 carries O-linked (Xyl...) (chondroitin sulfate) serine glycosylation. TSP type-1 domains lie at 309 to 362 (DPAA…ATCP), 364 to 417 (HGVW…AACP), 419 to 472 (EGQW…LECP), and 475 to 528 (DSKW…KRCP). 14 disulfide bridges follow: Cys-321/Cys-355, Cys-325/Cys-361, Cys-336/Cys-345, Cys-376/Cys-411, Cys-380/Cys-416, Cys-391/Cys-401, Cys-431/Cys-466, Cys-435/Cys-471, Cys-446/Cys-456, Cys-487/Cys-522, Cys-491/Cys-527, Cys-502/Cys-512, Cys-534/Cys-569, and Cys-557/Cys-587. The N-linked (GlcNAc...) asparagine glycan is linked to Asn-356. Asn-437 carries N-linked (GlcNAc...) asparagine glycosylation. N-linked (GlcNAc...) asparagine glycans are attached at residues Asn-560 and Asn-645. The GAIN-B domain maps to 757–924 (DRLFLPKEVL…AVLAQPPKDL (168 aa)). Residues 767-806 (SLSSPGKPATSGAAGSPGRGRGPGTVPPGPGHSHQRLLPA) are disordered. Residues 769–780 (SSPGKPATSGAA) show a composition bias toward low complexity. Asn-867 carries N-linked (GlcNAc...) asparagine glycosylation. 2 disulfide bridges follow: Cys-874–Cys-906 and Cys-894–Cys-908. The tract at residues 874-924 (CASWDYSRADASSGDWDTENCQTLETQAAHTRCQCQHLSTFAVLAQPPKDL) is GPS. A helical membrane pass occupies residues 937 to 957 (VIGCAVSCMALLTLLAIYAAF). Over 958–965 (WRFIKSER) the chain is Cytoplasmic. Residues 966 to 986 (SIILLNFCLSILASNILILVG) form a helical membrane-spanning segment. The Extracellular segment spans residues 987–994 (QSRVLSKG). A helical membrane pass occupies residues 995-1015 (VCTMTAAFLHFFFLSSFCWVL). Topologically, residues 1016 to 1036 (TEAWQSYLAVIGRMRTRLVRK) are cytoplasmic. The helical transmembrane segment at 1037 to 1057 (RFLCLGWGLPALVVAVSVGFT) threads the bilayer. Over 1058–1078 (RTKGYGTSSYCWLSLEGGLLY) the chain is Extracellular. The chain crosses the membrane as a helical span at residues 1079 to 1099 (AFVGPAAVIVLVNMLIGIIVF). Residues 1100–1121 (NKLMARDGISDKSKKQRAGSER) lie on the Cytoplasmic side of the membrane. Residues 1122-1142 (CPWASLLLPCSACGAVPSPLL) form a helical membrane-spanning segment. At 1143–1153 (SSASARNAMAS) the chain is on the extracellular side. A helical membrane pass occupies residues 1154–1174 (LWSSCVVLPLLALTWMSAVLA). At 1175 to 1585 (MTDRRSVLFQ…PPDGDFQTEV (411 aa)) the chain is on the cytoplasmic side. Tyr-1351 is subject to Phosphotyrosine. 3 disordered regions span residues 1359–1385 (LSLQPGGGGGGGEDAPRARPEGTPRRA), 1423–1454 (FQPPPPTPSARQVPEPGERSRTMPRTVPGSTM), and 1498–1585 (YRSQ…QTEV). Over residues 1372 to 1382 (DAPRARPEGTP) the composition is skewed to basic and acidic residues. The span at 1543–1552 (SWSTFKSMTL) shows a compositional bias: polar residues. Residues 1575–1585 (EPPDGDFQTEV) are compositionally biased toward acidic residues.

The protein belongs to the G-protein coupled receptor 2 family. Adhesion G-protein coupled receptor (ADGR) subfamily. Heterodimer of 2 chains generated by proteolytic processing; the large extracellular N-terminal fragment and the membrane-bound C-terminal fragment predominantly remain associated and non-covalently linked. Interacts with GABPB2. Interacts (via carboxy-terminus) with TAX1BP3. Interacts with GNAZ. Interacts with SH3GL2. Glycosylated. Post-translationally, autoproteolytically processed at the GPS region of the GAIN-B domain; this cleavage modulates receptor activity. Additionally, furin is involved in the cleavage at another site, in the middle of the extracellular domain, generating a soluble fragment. Detected in cerebrospinal fluid (at protein level). Strongly expressed in brain. Also detected in heart, thymus, skeletal muscle, and different cell lines.

The protein localises to the cell membrane. The protein resides in the secreted. Receptor activity is regulated by proteolytic processing. The long N-terminal has a an inhibitory effect on the constitutive signaling activity. Removal of the N-terminal region induces an increase of the receptor activity. In terms of biological role, orphan G-protein coupled receptor involved in cell adhesion and probably in cell-cell interactions. Activates NFAT-signaling pathway, a transcription factor, via the G-protein GNAZ. Involved in angiogenesis inhibition. The polypeptide is Adhesion G protein-coupled receptor B2 (Homo sapiens (Human)).